Reading from the N-terminus, the 350-residue chain is Protein Wnt-2 (350 aa).

A signal peptide spans 1–25 (MNFLPNGICFYLSVAICWFSSRVDA). Cystine bridges form between Cys-74–Cys-85, Cys-125–Cys-133, Cys-135–Cys-155, Cys-204–Cys-218, Cys-206–Cys-213, Cys-276–Cys-307, Cys-292–Cys-302, Cys-306–Cys-346, Cys-322–Cys-337, Cys-324–Cys-334, and Cys-329–Cys-330. Residue Asn-132 is glycosylated (N-linked (GlcNAc...) asparagine). Ser-210 is lipidated: O-palmitoleoyl serine; by PORCN. Asn-293 carries N-linked (GlcNAc...) asparagine glycosylation.

This sequence belongs to the Wnt family. In terms of processing, palmitoleoylation is required for efficient binding to frizzled receptors. Depalmitoleoylation leads to Wnt signaling pathway inhibition.

The protein resides in the secreted. The protein localises to the extracellular space. It is found in the extracellular matrix. Ligand for members of the frizzled family of seven transmembrane receptors. Functions in the canonical Wnt signaling pathway that results in activation of transcription factors of the TCF/LEF family. The protein is Protein Wnt-2 (wnt2) of Danio rerio (Zebrafish).